The sequence spans 281 residues: Shikimate dehydrogenase (NADP(+)) (281 aa).

Shikimate contacts are provided by residues 20-22 (SRS) and threonine 67. Lysine 71 functions as the Proton acceptor in the catalytic mechanism. Aspartate 83 contacts NADP(+). 2 residues coordinate shikimate: asparagine 92 and aspartate 108. Residues 133-137 (GAGGA), 157-162 (NRTEAR), and methionine 225 each bind NADP(+). Tyrosine 227 provides a ligand contact to shikimate. Glycine 248 provides a ligand contact to NADP(+).

The protein belongs to the shikimate dehydrogenase family. As to quaternary structure, homodimer.

The enzyme catalyses shikimate + NADP(+) = 3-dehydroshikimate + NADPH + H(+). Its pathway is metabolic intermediate biosynthesis; chorismate biosynthesis; chorismate from D-erythrose 4-phosphate and phosphoenolpyruvate: step 4/7. In terms of biological role, involved in the biosynthesis of the chorismate, which leads to the biosynthesis of aromatic amino acids. Catalyzes the reversible NADPH linked reduction of 3-dehydroshikimate (DHSA) to yield shikimate (SA). In Paracidovorax citrulli (strain AAC00-1) (Acidovorax citrulli), this protein is Shikimate dehydrogenase (NADP(+)).